Reading from the N-terminus, the 387-residue chain is Oleoyl-12-hydroxylase FAH12 (387 aa).

Positions 1–34 (MGGGGRMSTVITSNNSEKKGGSSHLKRAPHTKPP) are disordered. The next 2 helical transmembrane spans lie at 61–81 (AYDV…FPYI) and 88–108 (VAWL…WVIG). A Histidine box-1 motif is present at residues 109–113 (HECGH). Residues 121 to 141 (LADDIVGLIVHSALLVPYFSW) form a helical membrane-spanning segment. The Histidine box-2 motif lies at 145-149 (HRRHH). The next 3 helical transmembrane spans lie at 183 to 203 (VLTL…FNVS), 229 to 249 (IYIA…ATMA), and 253 to 273 (AWVM…LVMI). Residues 319–323 (HVAHH) carry the Histidine box-3 motif.

This sequence belongs to the fatty acid desaturase type 1 family. In terms of tissue distribution, expressed in seeds. Barely detected in leaves.

The protein localises to the microsome membrane. The catalysed reaction is a 1-acyl-2-(9Z)-octadecenoyl-sn-glycero-3-phosphocholine + 2 Fe(II)-[cytochrome b5] + O2 + 2 H(+) = a 1-acyl-2-[(R)-12-hydroxyoleoyl]-sn-glycero-3-phosphocholine + 2 Fe(III)-[cytochrome b5] + H2O. It functions in the pathway lipid metabolism; monounsaturated fatty acid biosynthesis. Inhibited by oleoyloxyethyl phosphocholine. Its function is as follows. Oleoyl-12-hydroxylase involved in the biosynthesis of ricinoleate (12-hydroxy-cis-9-octadecenoate), the major fatty acid constituent of the oil seeds from castor bean plants. Catalyzes the hydroxylation at the 12-position of 1-acyl-2-oleoyl-sn-glycero-3-phosphocholine (2-oleoyl-PC), which seems to be the actual physiological subtrate. It uses cytochrome b5 as an electron donor. May also be involved in the production of lesquerolic acid (14-hydroxyeicos-cis-ll-enoic acid) in vitro. This is Oleoyl-12-hydroxylase FAH12 from Ricinus communis (Castor bean).